The primary structure comprises 874 residues: MGISSIVTKETLKKKETNIEVQENNMNDLVKSASRVIAPLWPIATFAAHHPWMGLEKQSFEQVADWLKEIRNVDIYPSASMIHSAKAKGEIEELFLQSGLSRWLDSQSFHIPREKAERFCQEALKLERLPSSLLSSPELNKLAEEISYINTGGMKDSSLQLISSLIEDQKGENLSDILNYHIIKWCKLYLDDSGASWTMPNREKGLYRAWHHLITFDPALSKNERKVLKDWPQDAQGALTKALSELGISESNKQAYLEGHLLALPGWAGMIRWRSQQSIQEQELMIEYLAVRISMELAIVKPYLPIKNQKIEKKVEVVPLIASWIYWGDISIEEWLQMSATEQSELLAFAYRFDENIRKKLWLEAWEQTHAEQLREKIASKQRATNDKKHVLAQLAFCIDVRSEPFRRHLEKLGPFETFGIAGFFGLPIATSELGSNDSYPSLPVILKPKHQIKELADEKEFKNYKQRKKIDSSVSYTFKTMKQNVLTSMLLPEVSGPLLGLQMVTRSFVPRRVGSFIRNLRKTMLQKPDTTFSLNHVHDTKCEIPIGFTKEEKVNYVRQTLKMVGLTEKFAPLVVMCGHSSQSTNNPYAAALECGACGGAAGGFNARVFATLCNLPEVREALSAEGIKIPEDTIFVAAEHKTTVDELEWIYVPKLSEAAQEAFDRIESVMPNVSQHANRERLTQLPNFKTKIKNPSKEAHRFAEDWSEIRPEWGLARNASFIIGQRELTQDCDLEGRAFLHNYDWKQDESGDILASIIAGPGTVAQWINLQYYASTVAPHYYGSGNKTTQTVTSGLGVMQGNASDLLSGLPWQSVMQSDNETYHSPLRLLIVIQAPTKYIERLLKNDFTFREKVKNGWVRLASVDPEGQWKNW.

4 residues coordinate Zn(2+): Cys398, Asp400, His580, and Cys595.

This sequence belongs to the inorganic carbon transporter (TC 9.A.2) DabA family. Forms a complex with DabB. Zn(2+) serves as cofactor.

The protein resides in the cell membrane. Part of an energy-coupled inorganic carbon pump. The sequence is that of Probable inorganic carbon transporter subunit DabA from Bacillus cereus (strain ATCC 10987 / NRS 248).